We begin with the raw amino-acid sequence, 129 residues long: Small ribosomal subunit protein uS11 (129 aa).

The protein belongs to the universal ribosomal protein uS11 family. Part of the 30S ribosomal subunit. Interacts with proteins S7 and S18. Binds to IF-3.

In terms of biological role, located on the platform of the 30S subunit, it bridges several disparate RNA helices of the 16S rRNA. Forms part of the Shine-Dalgarno cleft in the 70S ribosome. The sequence is that of Small ribosomal subunit protein uS11 from Nitratidesulfovibrio vulgaris (strain ATCC 29579 / DSM 644 / CCUG 34227 / NCIMB 8303 / VKM B-1760 / Hildenborough) (Desulfovibrio vulgaris).